Consider the following 6269-residue polypeptide: Nonribosomal peptide synthetase 1 (6269 aa).

Residues 249–781 (ENDWSRVCSF…VSGKLDRKSI (533 aa)) are adenylation 1. Positions 803–879 (RAANSTEDQL…ELATRVKGVT (77 aa)) constitute a Carrier 1 domain. The residue at position 840 (serine 840) is an O-(pantetheine 4'-phosphoryl)serine. Residues 894–1342 (LSPIQKLHFM…TLSDFPMLSL (449 aa)) are epimerase 1. Positions 1373-1775 (SRMQQGILLS…FLQSLENIIH (403 aa)) are condensation 1. Positions 1725–2333 (HDPAEFPVYV…TGLLDRWFLR (609 aa)) are adenylation 2. Residues 2364 to 2386 (KPSPSQLLPSSTSATHRSSGTST) are disordered. Low complexity predominate over residues 2367–2376 (PSQLLPSSTS). The segment covering 2377-2386 (ATHRSSGTST) has biased composition (polar residues). The condensation 2 stretch occupies residues 2597–2670 (WRKYLADVES…TGSEEVCYGY (74 aa)). Positions 2845 to 3368 (RCAHEIIEQQ…SGKLDRKKLR (524 aa)) are adenylation 3. The Carrier 2 domain maps to 3392 to 3468 (ASDEGVEGTL…NMAKRCGMLQ (77 aa)). O-(pantetheine 4'-phosphoryl)serine is present on serine 3429. Positions 3512 to 3898 (CSPVQEGLLT…GQFSFVLEQL (387 aa)) are condensation 3. Positions 3919 to 4454 (DSKEVALWNK…VSGKLDRKKI (536 aa)) are adenylation 4. In terms of domain architecture, Carrier 3 spans 4487–4563 (EDKSTAAKIL…ELIQAAEVET (77 aa)). The residue at position 4524 (serine 4524) is an O-(pantetheine 4'-phosphoryl)serine. Positions 4578–5024 (LSPIQNLYFK…DFPLLPITYD (447 aa)) are epimerase 2. Residues 5052–5466 (SSVQEGILLS…PSQLVSELDL (415 aa)) form a condensation 4 region. A Carrier 4 domain is found at 5552–5628 (SKLMEPEKRL…DMLAAISASN (77 aa)). Serine 5589 is subject to O-(pantetheine 4'-phosphoryl)serine. Positions 5628-5658 (NSSSALEPDSPADSNNEKPAEPPRLVELERN) are disordered. Residues 5642-5657 (NNEKPAEPPRLVELER) are compositionally biased toward basic and acidic residues. The condensation 5 stretch occupies residues 5720 to 6067 (FFFDGRGSLD…SSSDGKLGVS (348 aa)). The Carrier 5 domain occupies 6139 to 6220 (SDILVHSDVV…GQMAVLTLHN (82 aa)).

The protein belongs to the NRP synthetase family. The thiolation domains are 4'-phosphopantetheinylated.

Functionally, nonribosomal peptide synthesis (NRPS) is a key mechanism responsible for the biosynthesis of bioactive metabolites which are potentially contributing to organismal virulence. Contributes to improved fungal tolerance against oxidative stress, during the infection process. This chain is Nonribosomal peptide synthetase 1 (NRPS1), found in Aspergillus fumigatus (strain ATCC MYA-4609 / CBS 101355 / FGSC A1100 / Af293) (Neosartorya fumigata).